Consider the following 66-residue polypeptide: Large ribosomal subunit protein bL31 (66 aa).

Zn(2+) is bound by residues C16, C18, C36, and C39.

It belongs to the bacterial ribosomal protein bL31 family. Type A subfamily. In terms of assembly, part of the 50S ribosomal subunit. Zn(2+) serves as cofactor.

In terms of biological role, binds the 23S rRNA. This chain is Large ribosomal subunit protein bL31, found in Geobacter metallireducens (strain ATCC 53774 / DSM 7210 / GS-15).